The sequence spans 178 residues: Translation initiation factor IF-3 (178 aa).

Positions 1 to 20 (MRRPFRATPVQKDGPRSNRD) are disordered.

This sequence belongs to the IF-3 family. As to quaternary structure, monomer.

Its subcellular location is the cytoplasm. Functionally, IF-3 binds to the 30S ribosomal subunit and shifts the equilibrium between 70S ribosomes and their 50S and 30S subunits in favor of the free subunits, thus enhancing the availability of 30S subunits on which protein synthesis initiation begins. In Brucella abortus biovar 1 (strain 9-941), this protein is Translation initiation factor IF-3.